Here is a 376-residue protein sequence, read N- to C-terminus: DNA-directed RNA polymerase subunit alpha (376 aa).

Residues 1–259 are alpha N-terminal domain (alpha-NTD); the sequence is MSDNSQNLLY…KHFSIFEKMD (259 aa). The alpha C-terminal domain (alpha-CTD) stretch occupies residues 276–376; the sequence is KDDILHKLVL…EKIRSKNVKG (101 aa).

Belongs to the RNA polymerase alpha chain family. Homodimer. The RNAP catalytic core consists of 2 alpha, 1 beta, 1 beta' and 1 omega subunit. When a sigma factor is associated with the core the holoenzyme is formed, which can initiate transcription.

It catalyses the reaction RNA(n) + a ribonucleoside 5'-triphosphate = RNA(n+1) + diphosphate. Its function is as follows. DNA-dependent RNA polymerase catalyzes the transcription of DNA into RNA using the four ribonucleoside triphosphates as substrates. This Chlamydia felis (strain Fe/C-56) (Chlamydophila felis) protein is DNA-directed RNA polymerase subunit alpha.